Consider the following 92-residue polypeptide: Acylphosphatase (92 aa).

Residues 5 to 92 form the Acylphosphatase-like domain; sequence RVHIIVSGLV…TSCREFRILT (88 aa). Catalysis depends on residues arginine 20 and asparagine 38.

The protein belongs to the acylphosphatase family.

It carries out the reaction an acyl phosphate + H2O = a carboxylate + phosphate + H(+). In Chlorobaculum tepidum (strain ATCC 49652 / DSM 12025 / NBRC 103806 / TLS) (Chlorobium tepidum), this protein is Acylphosphatase (acyP).